We begin with the raw amino-acid sequence, 307 residues long: Acyl transferase (307 aa).

Active-site charge relay system residues include Ser116, Asp213, and His243.

This sequence belongs to the LuxD family.

It functions in the pathway lipid metabolism; fatty acid reduction for biolumincescence. Acyl transferase is part of the fatty acid reductase system required for aldehyde biosynthesis; it produces fatty acids for the luminescent reaction. The polypeptide is Acyl transferase (Photorhabdus luminescens (Xenorhabdus luminescens)).